The primary structure comprises 125 residues: Large ribosomal subunit protein bL12 (125 aa).

The protein belongs to the bacterial ribosomal protein bL12 family. In terms of assembly, homodimer. Part of the ribosomal stalk of the 50S ribosomal subunit. Forms a multimeric L10(L12)X complex, where L10 forms an elongated spine to which 2 to 4 L12 dimers bind in a sequential fashion. Binds GTP-bound translation factors.

Its function is as follows. Forms part of the ribosomal stalk which helps the ribosome interact with GTP-bound translation factors. Is thus essential for accurate translation. The polypeptide is Large ribosomal subunit protein bL12 (Polaromonas naphthalenivorans (strain CJ2)).